A 269-amino-acid chain; its full sequence is Cyclic AMP-dependent transcription factor ATF-1 (269 aa).

Residues 1–90 are disordered; it reads MEDSHKSNTT…GEGENPSISA (90 aa). The span at 9–18 shows a compositional bias: polar residues; that stretch reads TTETASQPGS. The KID domain maps to 31–90; the sequence is QVSSLSESEESQDSSDSIGSSQKAHGILARRPSYRKILKDLSSEDTRGRKGEGENPSISA. S63 carries the phosphoserine; by CaMK1, CDK3, RPS6KA4 and RPS6KA5 modification. The segment covering 67-83 has biased composition (basic and acidic residues); it reads ILKDLSSEDTRGRKGEG. Position 196 is a phosphoserine; by HIPK2 (S196). A Glycyl lysine isopeptide (Lys-Gly) (interchain with G-Cter in SUMO2) cross-link involves residue K206. Positions 211–269 constitute a bZIP domain; it reads QLRREIRLMKNREAARECRRKKKEYVKCLENRVAVLENQNKTLIEELKTLKDLYSHKSV. Residues 213–237 are basic motif; it reads RREIRLMKNREAARECRRKKKEYVK. The segment at 239-260 is leucine-zipper; the sequence is LENRVAVLENQNKTLIEELKTL.

This sequence belongs to the bZIP family. ATF subfamily. In terms of assembly, binds DNA as a dimer. Interacts with HIPK2 and CDK3. Interacts with MOTS-c, a peptide produced by the mitochondrially encoded 12S rRNA MT-RNR1; the interaction occurs in the nucleus following metabolic stress. Phosphorylated at Ser-196 by HIPK2 in response to genotoxic stress. This phosphorylation promotes transcription repression of FTH1 and other antioxidant detoxification genes. The CDK3-mediated phosphorylation at Ser-63 promotes its transactivation and transcriptional activities. Phosphorylated at Ser-63 by RPS6KA4 and RPS6KA5 in response to mitogenic or stress stimuli.

It localises to the nucleus. In terms of biological role, binds the cAMP response element (CRE) (consensus: 5'-GTGACGT[AC][AG]-3'), a sequence present in many viral and cellular promoters. Binds to the Tax-responsive element (TRE) of HTLV-I. Mediates PKA-induced stimulation of CRE-reporter genes. Represses the expression of FTH1 and other antioxidant detoxification genes. Triggers cell proliferation and transformation. In Mus musculus (Mouse), this protein is Cyclic AMP-dependent transcription factor ATF-1 (Atf1).